A 719-amino-acid chain; its full sequence is Polyribonucleotide nucleotidyltransferase (719 aa).

Positions 491 and 497 each coordinate Mg(2+). The KH domain occupies 558 to 617 (PRMLTIKINPEKIRDVIGKGGATIRALTEETGTQIDISDDGTIVIASVDEAQAKEAQRRI). In terms of domain architecture, S1 motif spans 627–695 (GQVYDGSVLR…DKGRLRLSVK (69 aa)).

Belongs to the polyribonucleotide nucleotidyltransferase family. Requires Mg(2+) as cofactor.

The protein resides in the cytoplasm. The catalysed reaction is RNA(n+1) + phosphate = RNA(n) + a ribonucleoside 5'-diphosphate. In terms of biological role, involved in mRNA degradation. Catalyzes the phosphorolysis of single-stranded polyribonucleotides processively in the 3'- to 5'-direction. In Bordetella petrii (strain ATCC BAA-461 / DSM 12804 / CCUG 43448), this protein is Polyribonucleotide nucleotidyltransferase.